The following is a 481-amino-acid chain: MIVRTQNSESKIKEFFEFCKENEVEFVDFRFSDIKGTWNHIAYSFGALTHGMLKEGIPFDASCFKGWQGIEHSDMILTPDLVRYFIDPFSADVSVVVFCDVYDVYKNQPYEKCPRSIAKKALQHLKDSGLGDVAYFGAENEFFIFDSIKIKDASNSQYYEVDSEEGEWNRDRSFENGVNFGHRPGKQGGYMPVPPTDTMMDIRTEIVKVLNQVGLETFVVHHEVAQAQGEVGVKFGDLVEAADNVQKLKYVVKMVAHLNGKTATFMPKPLYGDNGSGMHTHVSVWKNNENLFSGETYKGLSEFALHFLGGVLRHARGLAAFTNASTNSYKRLIPGYEAPSILTYSANNRSASVRIPYGISKNSARFEFRFPDSSSNPYLAFAAILMAGMDGVKNKIDPGEAMDINLFKLTLDEIREKGIKQMPHTLRRSLEEMLADKQYLKESQVFSEEFIQAYQSLKFNAEVFPWESKPHPFEFITTYSC.

The GS beta-grasp domain occupies 22–106; that stretch reads NEVEFVDFRF…VFCDVYDVYK (85 aa). Residues 114 to 481 enclose the GS catalytic domain; sequence PRSIAKKALQ…PFEFITTYSC (368 aa). The Mg(2+) site is built by E139, E141, E223, and E230. Residues 274 to 275 and G275 each bind L-glutamate; that span reads NG. Position 279 (H279) interacts with Mg(2+). Residues 281–283 and S283 contribute to the ATP site; that span reads HVS. Residues R331, E337, and R349 each coordinate L-glutamate. 2 residues coordinate ATP: R349 and R354. E367 contacts Mg(2+). An L-glutamate-binding site is contributed by R369.

The protein belongs to the glutamine synthetase family. In terms of assembly, oligomer of 12 subunits arranged in the form of two hexameric ring. Mg(2+) serves as cofactor.

The protein localises to the cytoplasm. The enzyme catalyses L-glutamate + NH4(+) + ATP = L-glutamine + ADP + phosphate + H(+). Its activity is regulated as follows. The activity of this enzyme could be controlled by adenylation under conditions of abundant glutamine. Its function is as follows. Catalyzes the ATP-dependent biosynthesis of glutamine from glutamate and ammonia. The protein is Glutamine synthetase of Helicobacter pylori (strain ATCC 700392 / 26695) (Campylobacter pylori).